A 229-amino-acid polypeptide reads, in one-letter code: Cytidylate kinase (229 aa).

Position 12–20 (12–20 (GPSGTGKSS)) interacts with ATP.

It belongs to the cytidylate kinase family. Type 1 subfamily.

Its subcellular location is the cytoplasm. It catalyses the reaction CMP + ATP = CDP + ADP. The catalysed reaction is dCMP + ATP = dCDP + ADP. The chain is Cytidylate kinase from Rhodococcus opacus (strain B4).